The chain runs to 172 residues: Small ribosomal subunit protein uS5 (172 aa).

The S5 DRBM domain occupies 15–78 (YIEKLVNIRR…DKARKRMKSV (64 aa)).

The protein belongs to the universal ribosomal protein uS5 family. In terms of assembly, part of the 30S ribosomal subunit. Contacts proteins S4 and S8.

Functionally, with S4 and S12 plays an important role in translational accuracy. Located at the back of the 30S subunit body where it stabilizes the conformation of the head with respect to the body. This is Small ribosomal subunit protein uS5 from Ruthia magnifica subsp. Calyptogena magnifica.